The primary structure comprises 278 residues: Neuronal membrane glycoprotein M6-a (278 aa).

An N-acetylmethionine modification is found at Met1. Topologically, residues 1–22 are cytoplasmic; the sequence is MEENMEEGQTQKGCFECCIKCL. A helical transmembrane segment spans residues 23–43; sequence GGIPYASLIATILLYAGVALF. The Extracellular segment spans residues 44-84; it reads CGCGHEALSGTVNILQTYFEMARTAGDTLDVFTMIDIFKYV. A helical transmembrane segment spans residues 85–105; that stretch reads IYGIAAAFFVYGILLMVEGFF. Residues 106–127 are Cytoplasmic-facing; that stretch reads TTGAIKDLYGDFKITTCGRCVS. The helical transmembrane segment at 128 to 148 threads the bilayer; sequence AWFIMLTYLFMLAWLGVTAFT. Residues 149–213 lie on the Extracellular side of the membrane; sequence SLPVYMYFNL…STELNMTFHL (65 aa). N-linked (GlcNAc...) asparagine glycosylation occurs at Asn164. A disulfide bridge links Cys174 with Cys192. N-linked (GlcNAc...) asparagine glycosylation occurs at Asn208. A helical transmembrane segment spans residues 214 to 234; sequence FIVALAGAGAAVIAMVHYLMV. At 235 to 278 the chain is on the cytoplasmic side; sequence LSANWAYVKDACRMQKYEDIKSKEEQELHDIHSTRSKERLNAYT. The residue at position 256 (Ser256) is a Phosphoserine. Thr278 is subject to Phosphothreonine.

This sequence belongs to the myelin proteolipid protein family. Interacts with OPRM1. Interacts with palmitoyltransferase ZDHHC17/HIP14; the interaction leads to palmitoylation of GPM6A. Post-translationally, N-glycosylated. In terms of processing, palmitoylated by ZDHHC17/HIP14.

The protein resides in the cell membrane. It localises to the cell projection. The protein localises to the axon. Its subcellular location is the growth cone. It is found in the dendritic spine. The protein resides in the filopodium. It localises to the neuron projection. Functionally, involved in neuronal differentiation, including differentiation and migration of neuronal stem cells. Plays a role in neuronal plasticity and is involved in neurite and filopodia outgrowth, filopodia motility and probably synapse formation. GPM6A-induced filopodia formation involves mitogen-activated protein kinase (MAPK) and Src signaling pathways. May be involved in neuronal NGF-dependent Ca(2+) influx. May be involved in regulation of endocytosis and intracellular trafficking of G-protein-coupled receptors (GPCRs); may enhance internalization and recycling of mu-type opioid receptor. This chain is Neuronal membrane glycoprotein M6-a (GPM6A), found in Bos taurus (Bovine).